A 140-amino-acid polypeptide reads, in one-letter code: Protein ApaG (140 aa).

The ApaG domain occupies 13–137 (EARTRDIVVR…FSLHLPGAAM (125 aa)).

The sequence is that of Protein ApaG from Caulobacter vibrioides (strain ATCC 19089 / CIP 103742 / CB 15) (Caulobacter crescentus).